The primary structure comprises 245 residues: 1-(5-phosphoribosyl)-5-[(5-phosphoribosylamino)methylideneamino] imidazole-4-carboxamide isomerase (245 aa).

The active-site Proton acceptor is the Asp-8. Asp-130 (proton donor) is an active-site residue.

This sequence belongs to the HisA/HisF family.

The protein localises to the cytoplasm. The enzyme catalyses 1-(5-phospho-beta-D-ribosyl)-5-[(5-phospho-beta-D-ribosylamino)methylideneamino]imidazole-4-carboxamide = 5-[(5-phospho-1-deoxy-D-ribulos-1-ylimino)methylamino]-1-(5-phospho-beta-D-ribosyl)imidazole-4-carboxamide. The protein operates within amino-acid biosynthesis; L-histidine biosynthesis; L-histidine from 5-phospho-alpha-D-ribose 1-diphosphate: step 4/9. This chain is 1-(5-phosphoribosyl)-5-[(5-phosphoribosylamino)methylideneamino] imidazole-4-carboxamide isomerase, found in Pseudomonas putida (strain GB-1).